A 533-amino-acid polypeptide reads, in one-letter code: Phospho-2-dehydro-3-deoxyheptonate aldolase 1, chloroplastic (533 aa).

Residues 1–57 (MALSTNSTTSSLLPKTPLVQQPLLKNASLPTTTKAIRFIQPISAIHSSDSSKNTPIV) constitute a chloroplast transit peptide. Positions 47-56 (SSDSSKNTPI) are enriched in polar residues. Residues 47–70 (SSDSSKNTPIVSAKPSSPPAATST) form a disordered region. Low complexity predominate over residues 57–70 (VSAKPSSPPAATST). Cysteine 145 is a Mn(2+) binding site. Substrate is bound by residues arginine 184, 343 to 344 (ER), lysine 366, and arginine 397. The Mn(2+) site is built by histidine 429, glutamate 471, and aspartate 501.

The protein belongs to the class-II DAHP synthase family. In terms of assembly, homodimer. It depends on Mn(2+) as a cofactor. As to expression, mostly expressed in flowers, especially in petal limbs and tubes, and, to a lower extent, in roots, stems, stigmas, anthers, leaves and sepals.

It is found in the plastid. The protein localises to the chloroplast. It catalyses the reaction D-erythrose 4-phosphate + phosphoenolpyruvate + H2O = 7-phospho-2-dehydro-3-deoxy-D-arabino-heptonate + phosphate. The protein operates within metabolic intermediate biosynthesis; chorismate biosynthesis; chorismate from D-erythrose 4-phosphate and phosphoenolpyruvate: step 1/7. Involved in the production of volatile organic compounds (VOCs), including floral volatile benzenoids and phenylpropanoids (FVBP), in flowers of fragrant cultivars (e.g. cv. Mitchell and cv. V26), scent attracting pollinators (e.g. the night-active hawkmoth pollinator Manduca sexta). Catalyzes an aldol-like condensation reaction between phosphoenolpyruvate (PEP) and D-erythrose 4-phosphate (E4P) to generate 3-deoxy-D-arabino-heptulosonate 7-phosphate (DAH7P) and inorganic phosphate. In Petunia hybrida (Petunia), this protein is Phospho-2-dehydro-3-deoxyheptonate aldolase 1, chloroplastic.